Reading from the N-terminus, the 80-residue chain is Metallothionein-like protein type 2 (80 aa).

It belongs to the metallothionein superfamily. Type 15 family.

Functionally, metallothioneins have a high content of cysteine residues that bind various heavy metals. This is Metallothionein-like protein type 2 (MTI) from Ricinus communis (Castor bean).